Consider the following 131-residue polypeptide: UPF0134 protein MPN_010 (131 aa).

Belongs to the UPF0134 family.

In Mycoplasma pneumoniae (strain ATCC 29342 / M129 / Subtype 1) (Mycoplasmoides pneumoniae), this protein is UPF0134 protein MPN_010.